Here is a 185-residue protein sequence, read N- to C-terminus: Translation initiation factor IF-3 (185 aa).

The protein belongs to the IF-3 family. In terms of assembly, monomer.

The protein localises to the cytoplasm. Its function is as follows. IF-3 binds to the 30S ribosomal subunit and shifts the equilibrium between 70S ribosomes and their 50S and 30S subunits in favor of the free subunits, thus enhancing the availability of 30S subunits on which protein synthesis initiation begins. The polypeptide is Translation initiation factor IF-3 (Rickettsia prowazekii (strain Madrid E)).